A 208-amino-acid chain; its full sequence is Large ribosomal subunit protein uL3 (208 aa).

Positions 123-147 (RHGQSRGPMAHGSRYHRRPGSMGPV) are disordered.

The protein belongs to the universal ribosomal protein uL3 family. In terms of assembly, part of the 50S ribosomal subunit. Forms a cluster with proteins L14 and L19.

Functionally, one of the primary rRNA binding proteins, it binds directly near the 3'-end of the 23S rRNA, where it nucleates assembly of the 50S subunit. The protein is Large ribosomal subunit protein uL3 of Streptococcus gordonii (strain Challis / ATCC 35105 / BCRC 15272 / CH1 / DL1 / V288).